Reading from the N-terminus, the 122-residue chain is Large ribosomal subunit protein uL14 (122 aa).

It belongs to the universal ribosomal protein uL14 family. In terms of assembly, part of the 50S ribosomal subunit. Forms a cluster with proteins L3 and L19. In the 70S ribosome, L14 and L19 interact and together make contacts with the 16S rRNA in bridges B5 and B8.

Functionally, binds to 23S rRNA. Forms part of two intersubunit bridges in the 70S ribosome. This is Large ribosomal subunit protein uL14 from Dechloromonas aromatica (strain RCB).